We begin with the raw amino-acid sequence, 427 residues long: Homeotic protein caudal (427 aa).

Residues 104–273 (QLMQQHHHHH…QPQPGKTRTK (170 aa)) form a disordered region. A compositionally biased stretch (low complexity) spans 116–129 (ASSSSASSGSSSSG). Over residues 145–164 (GVGGAGGGGGVGGATDGGPG) the composition is skewed to gly residues. The span at 183-195 (ITVSGSEISSPGA) shows a compositional bias: polar residues. Residues 209 to 243 (HLSAVANNNNNNNNNNNSPSTHNNNNNNNSVSNNN) are compositionally biased toward low complexity. Threonine 245 is subject to Phosphothreonine. Residues 252-257 (YFDWMK) carry the Antp-type hexapeptide motif. Residues 273–332 (KDKYRVVYTDFQRLELEKEYCTSRYITIRRKSELAQTLSLSERQVKIWFQNRRAKERKQN) constitute a DNA-binding region (homeobox).

The protein belongs to the Caudal homeobox family. As to expression, maternally localized in an anteroposterior gradient in the syncytial blastoderm. Also expressed in the pole cells. Zygotically localized in the primordia of the terminal abdominal segment, the hindgut and in the posterior midgut rudiment. Expressed in the gut, the gonads and parts of the genital disks of third instar larvae (at protein level).

Its subcellular location is the nucleus. Its function is as follows. Caudal (cad) is one of a number of transcription factors controlling segmentation of the embryo. Further transcriptional regulation via a 5' flanking region containing DNA replication-related elements (DRE) and by dref also regulated by trh and tgo via the CNS midline element. Alongside Bicoid (bcd), caudal forms concentration gradients down the anterior-posterior (A-P) axis providing positional information and subsequent induction of the gap genes. Plays a role in gastrulation/germ band extension, hindgut morphogenesis, positive regulation of cell proliferation, genital disk development and pattern formation. Acts as a key regulator of the Hox gene network and activates transcription via the downstream core promoter element (DPE) relative to the TATA box. Plays a role in the establishment of the hindgut and in the invagination of the hindgut primordium during gastrulation. These effects on the gut are achieved by acting combinatorially at the posterior of the embryo to activate transcription of different targets including fog, fkh and wg. Caudal is involved in regulation of proliferation through transactivation of the E2F gene. Postembryonically its function is mostly restricted to the intestine where it regulates antimicrobial peptide (AMP) levels preserving the normal gut flora. This chain is Homeotic protein caudal (cad), found in Drosophila melanogaster (Fruit fly).